We begin with the raw amino-acid sequence, 38 residues long: Photosystem II reaction center protein T (38 aa).

Residues 3-23 form a helical membrane-spanning segment; the sequence is ALVYTFLLVSTLGIIFFAIFF.

It belongs to the PsbT family. In terms of assembly, PSII is composed of 1 copy each of membrane proteins PsbA, PsbB, PsbC, PsbD, PsbE, PsbF, PsbH, PsbI, PsbJ, PsbK, PsbL, PsbM, PsbT, PsbY, PsbZ, Psb30/Ycf12, at least 3 peripheral proteins of the oxygen-evolving complex and a large number of cofactors. It forms dimeric complexes.

It localises to the plastid. The protein resides in the chloroplast thylakoid membrane. Functionally, found at the monomer-monomer interface of the photosystem II (PS II) dimer, plays a role in assembly and dimerization of PSII. PSII is a light-driven water plastoquinone oxidoreductase, using light energy to abstract electrons from H(2)O, generating a proton gradient subsequently used for ATP formation. The polypeptide is Photosystem II reaction center protein T (Secale cereale (Rye)).